The following is a 232-amino-acid chain: Ferric nitrobindin-like protein (232 aa).

Over residues 1–10 (MSENETSKTG) the composition is skewed to polar residues. Residues 1–33 (MSENETSKTGGNAGVPGSGADAPSLSDSPAISG) form a disordered region. The short motif at 85–91 (GVWRGEG) is the GXWXGXG element.

This sequence belongs to the nitrobindin family.

The polypeptide is Ferric nitrobindin-like protein (Corynebacterium efficiens (strain DSM 44549 / YS-314 / AJ 12310 / JCM 11189 / NBRC 100395)).